A 291-amino-acid polypeptide reads, in one-letter code: Homeobox protein SIX2 (291 aa).

The segment at residues 124–183 is a DNA-binding region (homeobox); that stretch reads GEETSYCFKEKSRSVLREWYAHNPYPSPREKRELAEATGLTTTQVSNWFKNRRQRDRAAE. The tract at residues 168-279 is disordered; it reads VSNWFKNRRQ…HHHGLQDSIL (112 aa). The segment covering 179-190 has biased composition (basic and acidic residues); sequence DRAAEAKERENN. Residues 224–233 show a composition bias toward low complexity; it reads HSSSSPALLL. Residues 249–259 are compositionally biased toward pro residues; it reads PPGPSAVPVPV.

Belongs to the SIX/Sine oculis homeobox family. As to quaternary structure, interacts with TCF7L2; in a canonical Wnt signaling independent manner; prevents transcription of differentiation genes in cap mesenchyme. Interacts with OSR1; form a strong repressor complex with TCF7L2, TLE2 and TLE3 to prevent the activation of Wnt/beta-catenin target genes in the cap mesenchyme. Interacts with HOXA11, EYA1 and EYA3. Strongly expressed in skeletal muscle. Expressed in Wilms' tumor and in the cap mesenchyme of fetal kidney (at protein level).

It is found in the nucleus. Transcription factor that plays an important role in the development of several organs, including kidney, skull and stomach. During kidney development, maintains cap mesenchyme multipotent nephron progenitor cells in an undifferentiated state by opposing the inductive signals emanating from the ureteric bud and cooperates with WNT9B to promote renewing progenitor cells proliferation. Acts through its interaction with TCF7L2 and OSR1 in a canonical Wnt signaling independent manner preventing transcription of differentiation genes in cap mesenchyme such as WNT4. Also acts independently of OSR1 to activate expression of many cap mesenchyme genes, including itself, GDNF and OSR1. During craniofacial development plays a role in growth and elongation of the cranial base through regulation of chondrocyte differentiation. During stomach organogenesis, controls pyloric sphincter formation and mucosal growth through regulation of a gene network including NKX2-5, BMPR1B, BMP4, SOX9 and GREM1. During branchial arch development, acts to mediate HOXA2 control over the insulin-like growth factor pathway. May also be involved in limb tendon and ligament development. Plays a role in cell proliferation and migration. The chain is Homeobox protein SIX2 (SIX2) from Homo sapiens (Human).